Here is a 204-residue protein sequence, read N- to C-terminus: uncharacterized protein (204 aa).

An N-terminal signal peptide occupies residues 1–16 (MKYTFLAVLSAVTVLA).

The protein localises to the secreted. This is an uncharacterized protein from Arthroderma benhamiae (strain ATCC MYA-4681 / CBS 112371) (Trichophyton mentagrophytes).